Here is a 25-residue protein sequence, read N- to C-terminus: C-reactive protein P2 subunit 4 (25 aa).

A Pentraxin (PTX) domain is found at 1–25 (GRSLVFPEETANSFVELFPAKELSL).

The protein belongs to the pentraxin family. In terms of assembly, heteropentamer. Discoid arrangement of 5 non-covalently bound subunits 1, 2, 3 and 4. Ca(2+) is required as a cofactor. In terms of processing, glycosylated.

The protein localises to the secreted. Functionally, displays several functions associated with host defense: it promotes agglutination, bacterial capsular swelling, phagocytosis, and complement fixation through its calcium-dependent binding to phosphorylcholine. This chain is C-reactive protein P2 subunit 4, found in Gadus morhua (Atlantic cod).